The primary structure comprises 150 residues: Large ribosomal subunit protein bL9 (150 aa).

Belongs to the bacterial ribosomal protein bL9 family.

Its function is as follows. Binds to the 23S rRNA. The chain is Large ribosomal subunit protein bL9 from Colwellia psychrerythraea (strain 34H / ATCC BAA-681) (Vibrio psychroerythus).